The primary structure comprises 89 residues: Small ribosomal subunit protein uS15 (89 aa).

Belongs to the universal ribosomal protein uS15 family. Part of the 30S ribosomal subunit. Forms a bridge to the 50S subunit in the 70S ribosome, contacting the 23S rRNA.

In terms of biological role, one of the primary rRNA binding proteins, it binds directly to 16S rRNA where it helps nucleate assembly of the platform of the 30S subunit by binding and bridging several RNA helices of the 16S rRNA. Forms an intersubunit bridge (bridge B4) with the 23S rRNA of the 50S subunit in the ribosome. The sequence is that of Small ribosomal subunit protein uS15 from Hamiltonella defensa subsp. Acyrthosiphon pisum (strain 5AT).